The following is a 508-amino-acid chain: DNA polymerase II small subunit (508 aa).

Positions A66–P80 are enriched in low complexity. A disordered region spans residues A66–T122. Polar residues predominate over residues H86–P95.

It belongs to the DNA polymerase delta/II small subunit family. Heterodimer of a large subunit and a small subunit.

The enzyme catalyses DNA(n) + a 2'-deoxyribonucleoside 5'-triphosphate = DNA(n+1) + diphosphate. It catalyses the reaction Exonucleolytic cleavage in the 3'- to 5'-direction to yield nucleoside 5'-phosphates.. Its function is as follows. Possesses two activities: a DNA synthesis (polymerase) and an exonucleolytic activity that degrades single-stranded DNA in the 3' to 5' direction. Has a template-primer preference which is characteristic of a replicative DNA polymerase. In Halobacterium salinarum (strain ATCC 29341 / DSM 671 / R1), this protein is DNA polymerase II small subunit.